A 221-amino-acid polypeptide reads, in one-letter code: Putative efflux system component YhbJ (221 aa).

Residues 17 to 37 traverse the membrane as a helical segment; the sequence is LILTNIIGLIVVLAIIAGGAY.

Belongs to the membrane fusion protein (MFP) (TC 8.A.1) family.

The protein resides in the cell membrane. This is Putative efflux system component YhbJ (yhbJ) from Bacillus subtilis (strain 168).